Here is a 123-residue protein sequence, read N- to C-terminus: Large ribosomal subunit protein bL12 (123 aa).

This sequence belongs to the bacterial ribosomal protein bL12 family. As to quaternary structure, homodimer. Part of the ribosomal stalk of the 50S ribosomal subunit. Forms a multimeric L10(L12)X complex, where L10 forms an elongated spine to which 2 to 4 L12 dimers bind in a sequential fashion. Binds GTP-bound translation factors.

Functionally, forms part of the ribosomal stalk which helps the ribosome interact with GTP-bound translation factors. Is thus essential for accurate translation. In Rickettsia bellii (strain OSU 85-389), this protein is Large ribosomal subunit protein bL12.